Reading from the N-terminus, the 256-residue chain is MSKDLISTDEYIKIKKKRKRIKKIVVLFIFLISILVTLCLKIPYFNIESIEIKGNVNIPKEVIKDSSTIKTGNNIFYTNKKDAIENISLNPYIEEVKITKKLPNKLQIYVKEREALFYNKVDNDFFIISKNGCVLEKRKEIKNMKLINLQGFEFNESKIGSALKAKDERAVKILNDFGVLLKNNTSDVIFTQLDLRNLLDIKIYYNGICVKIGTSDQIEKKLNTAINILKRDELKKAKKGYVDVSYEGNPVFYIEK.

The Cytoplasmic segment spans residues 1–23; it reads MSKDLISTDEYIKIKKKRKRIKK. A helical membrane pass occupies residues 24-44; that stretch reads IVVLFIFLISILVTLCLKIPY. The 69-residue stretch at 45–113 folds into the POTRA domain; sequence FNIESIEIKG…NKLQIYVKER (69 aa). The Extracellular portion of the chain corresponds to 45–256; that stretch reads FNIESIEIKG…EGNPVFYIEK (212 aa).

It belongs to the FtsQ/DivIB family. DivIB subfamily.

Its subcellular location is the cell membrane. Functionally, cell division protein that may be involved in stabilizing or promoting the assembly of the division complex. The protein is Cell division protein DivIB of Clostridium botulinum (strain Hall / ATCC 3502 / NCTC 13319 / Type A).